A 188-amino-acid chain; its full sequence is Small ribosomal subunit protein bS18c (188 aa).

Positions 1–19 (MNNQSFNNFSQVNSNSSFF) are enriched in low complexity. Residues 1–79 (MNNQSFNNFS…TSNKRKVLSV (79 aa)) form a disordered region. The span at 25-71 (NLQNTNLEMTNGTNPPSSFSKQTPQKRQSFGTNTNFSKGNSSRGSTS) shows a compositional bias: polar residues.

This sequence belongs to the bacterial ribosomal protein bS18 family. As to quaternary structure, part of the 30S ribosomal subunit.

The protein resides in the plastid. The protein localises to the chloroplast. The polypeptide is Small ribosomal subunit protein bS18c (Tetradesmus obliquus (Green alga)).